The primary structure comprises 514 residues: Ubiquitin carboxyl-terminal hydrolase 22 (514 aa).

The UBP-type zinc finger occupies 10 to 127 (PGCAHLGSFK…KEEQRKAWKM (118 aa)). Zn(2+) contacts are provided by C12, H14, C52, C55, C65, C68, C73, H78, H82, H88, C101, and C104. At K118 the chain carries N6-acetyllysine. T136 carries the post-translational modification Phosphothreonine. One can recognise a USP domain in the interval 165-509 (RGLINLGNTC…EGYLLFYHKQ (345 aa)). The active-site Nucleophile is the C174. S226 is modified (phosphoserine). Catalysis depends on H468, which acts as the Proton acceptor.

This sequence belongs to the peptidase C19 family. UBP8 subfamily. In terms of assembly, component of some SAGA transcription coactivator-HAT complexes, at least composed of ATXN7, ATXN7L3, ENY2, GCN5L2, SUPT3H, TAF10, TRRAP and USP22. Within the SAGA complex, ATXN7L3, ENY2 and USP22 form a subcomplex required for histone deubiquitination. Interacts directly with ATXN7L3; leading to its recruitment to the SAGA complex. Interacts with ATXN7L3 and weakly with ATXN7L3B. Interacts with MED1. Phosphorylated in G2/M phase, but not in G1 phase by CDK1. Post-translationally, ubiquitinated and subsequently degraded in a CDC20-dependent manner.

The protein resides in the nucleus. Its subcellular location is the cytoplasm. The enzyme catalyses Thiol-dependent hydrolysis of ester, thioester, amide, peptide and isopeptide bonds formed by the C-terminal Gly of ubiquitin (a 76-residue protein attached to proteins as an intracellular targeting signal).. Deubiquitinase that plays a role in several cellular processes including transcriptional regulation, cell cycle progression or innate immunity. As part of the transcription regulatory histone acetylation (HAT) complex SAGA, catalyzes the deubiquitination of both histones H2A and H2B, thereby acting as a transcriptional coactivator. Recruited to specific gene promoters by activators such as MYC, where it is required for transcription. Facilitates cell-cycle progression by stabilizing CCNB1 and antagonizing its proteasome-mediated degradation in a cell cycle-specific manner. Modulates cell cycle progression and apoptosis also by antagonizing TP53 transcriptional activation through deacetylase SIRT1 stabilization. Plays multiple roles in immunity and inflammation. Participates in antiviral response by deubiquitinating the importin KPNA2, leading to IRF3 nuclear translocation and subsequent type I interferon production. Acts as a central regulator of type III IFN signaling by negatively regulating STING1 activation and ubiquitination. Inhibits NLRP3 inflammasome activation by promoting NLRP3 degradation through ATG5-dependent autophagy. Deubiquitinates CD274 to induce its stabilization and thereby participates in maintenance of immune tolerance to self. Controls necroptotic cell death by regulating RIPK3 phosphorylation and ubiquitination. During bacterial infection, promotes pro-inflammatory response by targeting TRAF6 and removing its 'Lys-48'-linked polyubiquitination. This Bos taurus (Bovine) protein is Ubiquitin carboxyl-terminal hydrolase 22 (USP22).